Here is a 191-residue protein sequence, read N- to C-terminus: uncharacterized protein (191 aa).

One can recognise an HTH tetR-type domain in the interval 3–63; it reads IDRKKLILEA…EIFTTLLKEM (61 aa). Positions 26-45 form a DNA-binding region, H-T-H motif; sequence TMDLVAKLANVGKGTIYTFF.

This is an uncharacterized protein from Bacillus subtilis (strain 168).